We begin with the raw amino-acid sequence, 341 residues long: ATPase GET3 (341 aa).

Residue 34-41 (KGGVGKTT) coordinates ATP. D63 is a catalytic residue. Residues E245 and N272 each contribute to the ATP site. Residues C283 and C286 each coordinate Zn(2+).

This sequence belongs to the arsA ATPase family. As to quaternary structure, homodimer.

The protein resides in the cytoplasm. Its subcellular location is the endoplasmic reticulum. In terms of biological role, ATPase required for the post-translational delivery of tail-anchored (TA) proteins to the endoplasmic reticulum. Recognizes and selectively binds the transmembrane domain of TA proteins in the cytosol. This complex then targets to the endoplasmic reticulum by membrane-bound receptors, where the tail-anchored protein is released for insertion. This process is regulated by ATP binding and hydrolysis. ATP binding drives the homodimer towards the closed dimer state, facilitating recognition of newly synthesized TA membrane proteins. ATP hydrolysis is required for insertion. Subsequently, the homodimer reverts towards the open dimer state, lowering its affinity for the membrane-bound receptor, and returning it to the cytosol to initiate a new round of targeting. This is ATPase GET3 from Paracoccidioides brasiliensis (strain Pb18).